An 876-amino-acid polypeptide reads, in one-letter code: Alanine--tRNA ligase (876 aa).

Lysine 74 carries the post-translational modification N6-acetyllysine. 4 residues coordinate Zn(2+): histidine 564, histidine 568, cysteine 666, and histidine 670.

Belongs to the class-II aminoacyl-tRNA synthetase family. As to quaternary structure, homotetramer. It depends on Zn(2+) as a cofactor.

Its subcellular location is the cytoplasm. It carries out the reaction tRNA(Ala) + L-alanine + ATP = L-alanyl-tRNA(Ala) + AMP + diphosphate. Catalyzes the attachment of alanine to tRNA(Ala) in a two-step reaction: alanine is first activated by ATP to form Ala-AMP and then transferred to the acceptor end of tRNA(Ala). Also edits incorrectly charged Ser-tRNA(Ala) and Gly-tRNA(Ala) via its editing domain. This is Alanine--tRNA ligase from Shigella boydii serotype 4 (strain Sb227).